A 418-amino-acid chain; its full sequence is Voltage-gated ClC-type chloride channel ClcB (418 aa).

10 helical membrane-spanning segments follow: residues Leu5 to Ala25, Leu54 to Phe74, Leu146 to Gly166, Leu168 to Ile188, Ala222 to Met242, Trp258 to Trp278, Ala291 to Ala311, Gly316 to Tyr336, Leu352 to Met372, and Met380 to Ile400.

This sequence belongs to the chloride channel (TC 2.A.49) family. ClcB subfamily.

It is found in the cell inner membrane. In terms of biological role, probably acts as an electrical shunt for an outwardly-directed proton pump that is linked to amino acid decarboxylation, as part of the extreme acid resistance (XAR) response. In Escherichia coli (strain SMS-3-5 / SECEC), this protein is Voltage-gated ClC-type chloride channel ClcB.